A 150-amino-acid chain; its full sequence is Large ribosomal subunit protein uL11 (150 aa).

The protein belongs to the universal ribosomal protein uL11 family. Part of the ribosomal stalk of the 50S ribosomal subunit. Interacts with L10 and the large rRNA to form the base of the stalk. L10 forms an elongated spine to which L12 dimers bind in a sequential fashion forming a multimeric L10(L12)X complex. One or more lysine residues are methylated.

Its function is as follows. Forms part of the ribosomal stalk which helps the ribosome interact with GTP-bound translation factors. This is Large ribosomal subunit protein uL11 from Azobacteroides pseudotrichonymphae genomovar. CFP2.